Consider the following 434-residue polypeptide: Flagellum-specific ATP synthase (434 aa).

164–171 (AGSGVGKS) contacts ATP.

This sequence belongs to the ATPase alpha/beta chains family.

Its subcellular location is the cytoplasm. The catalysed reaction is ATP + H2O + 4 H(+)(in) = ADP + phosphate + 5 H(+)(out). Probable catalytic subunit of a protein translocase for flagellum-specific export, or a proton translocase involved in local circuits at the flagellum. The polypeptide is Flagellum-specific ATP synthase (fliI) (Helicobacter pylori (strain J99 / ATCC 700824) (Campylobacter pylori J99)).